Here is a 327-residue protein sequence, read N- to C-terminus: L-lactate dehydrogenase (327 aa).

NAD(+)-binding positions include V18, D39, K44, Y69, and G83 to A84. Substrate is bound by residues Q86, R92, and N124–D127. NAD(+) contacts are provided by residues A122 to N124 and S147. D152–R155 contacts substrate. 2 residues coordinate beta-D-fructose 1,6-bisphosphate: R157 and H172. Residue H179 is the Proton acceptor of the active site. Y224 carries the phosphotyrosine modification. T233 provides a ligand contact to substrate.

It belongs to the LDH/MDH superfamily. LDH family. As to quaternary structure, homotetramer.

It localises to the cytoplasm. It catalyses the reaction (S)-lactate + NAD(+) = pyruvate + NADH + H(+). It functions in the pathway fermentation; pyruvate fermentation to lactate; (S)-lactate from pyruvate: step 1/1. Allosterically activated by fructose 1,6-bisphosphate (FBP). Catalyzes the conversion of lactate to pyruvate. The sequence is that of L-lactate dehydrogenase from Streptococcus equi subsp. zooepidemicus (strain H70).